A 715-amino-acid chain; its full sequence is Fatty acid oxidation complex subunit alpha (715 aa).

Residues 8–197 (NSQPSAFSLT…NLGLVEEAVP (190 aa)) form an enoyl-CoA hydratase region. Residues 313–715 (ATIKKVGVLG…MANEEQSFYS (403 aa)) are 3-hydroxyacyl-CoA dehydrogenase.

In the N-terminal section; belongs to the enoyl-CoA hydratase/isomerase family. It in the central section; belongs to the 3-hydroxyacyl-CoA dehydrogenase family. Heterotetramer of two alpha chains (FadJ) and two beta chains (FadI).

The protein resides in the cytoplasm. The enzyme catalyses a (3S)-3-hydroxyacyl-CoA = a (2E)-enoyl-CoA + H2O. The catalysed reaction is a 4-saturated-(3S)-3-hydroxyacyl-CoA = a (3E)-enoyl-CoA + H2O. It carries out the reaction a (3S)-3-hydroxyacyl-CoA + NAD(+) = a 3-oxoacyl-CoA + NADH + H(+). It catalyses the reaction (3S)-3-hydroxybutanoyl-CoA = (3R)-3-hydroxybutanoyl-CoA. The protein operates within lipid metabolism; fatty acid beta-oxidation. In terms of biological role, catalyzes the formation of a hydroxyacyl-CoA by addition of water on enoyl-CoA. Also exhibits 3-hydroxyacyl-CoA epimerase and 3-hydroxyacyl-CoA dehydrogenase activities. This Photobacterium profundum (strain SS9) protein is Fatty acid oxidation complex subunit alpha.